The chain runs to 158 residues: Transcription elongation factor GreA (158 aa).

The segment covering 24-43 (DVERPKASEAIGEARDKGDL) has biased composition (basic and acidic residues). The disordered stretch occupies residues 24–47 (DVERPKASEAIGEARDKGDLSENA). A coiled-coil region spans residues 48 to 68 (EYDAAKEAQGLLEMKISKMEE).

The protein belongs to the GreA/GreB family.

Necessary for efficient RNA polymerase transcription elongation past template-encoded arresting sites. The arresting sites in DNA have the property of trapping a certain fraction of elongating RNA polymerases that pass through, resulting in locked ternary complexes. Cleavage of the nascent transcript by cleavage factors such as GreA or GreB allows the resumption of elongation from the new 3'terminus. GreA releases sequences of 2 to 3 nucleotides. This is Transcription elongation factor GreA from Christiangramia forsetii (strain DSM 17595 / CGMCC 1.15422 / KT0803) (Gramella forsetii).